A 368-amino-acid polypeptide reads, in one-letter code: Chorismate synthase (368 aa).

The NADP(+) site is built by arginine 48 and arginine 54. FMN is bound by residues 125-127 (RSS), 238-239 (NA), glycine 278, 293-297 (KPTSS), and arginine 319.

This sequence belongs to the chorismate synthase family. As to quaternary structure, homotetramer. FMNH2 serves as cofactor.

It carries out the reaction 5-O-(1-carboxyvinyl)-3-phosphoshikimate = chorismate + phosphate. It functions in the pathway metabolic intermediate biosynthesis; chorismate biosynthesis; chorismate from D-erythrose 4-phosphate and phosphoenolpyruvate: step 7/7. Catalyzes the anti-1,4-elimination of the C-3 phosphate and the C-6 proR hydrogen from 5-enolpyruvylshikimate-3-phosphate (EPSP) to yield chorismate, which is the branch point compound that serves as the starting substrate for the three terminal pathways of aromatic amino acid biosynthesis. This reaction introduces a second double bond into the aromatic ring system. The polypeptide is Chorismate synthase (Methylibium petroleiphilum (strain ATCC BAA-1232 / LMG 22953 / PM1)).